Reading from the N-terminus, the 665-residue chain is UvrABC system protein B (665 aa).

A Helicase ATP-binding domain is found at 25-178 (ASLQAEHRFQ…RQLLRDLTTI (154 aa)). 38 to 45 (GATGTGKT) is a binding site for ATP. Positions 91-114 (YYDYYQPEAYIPVTDTYIEKTAAI) match the Beta-hairpin motif. The region spanning 429–595 (QVDDLLGEVR…PIVKKASNAI (167 aa)) is the Helicase C-terminal domain. In terms of domain architecture, UVR spans 626–661 (PELITQLEAQMKEAAKKLEFEEAAKYRDRIKQLRDK).

Belongs to the UvrB family. Forms a heterotetramer with UvrA during the search for lesions. Interacts with UvrC in an incision complex.

The protein resides in the cytoplasm. The UvrABC repair system catalyzes the recognition and processing of DNA lesions. A damage recognition complex composed of 2 UvrA and 2 UvrB subunits scans DNA for abnormalities. Upon binding of the UvrA(2)B(2) complex to a putative damaged site, the DNA wraps around one UvrB monomer. DNA wrap is dependent on ATP binding by UvrB and probably causes local melting of the DNA helix, facilitating insertion of UvrB beta-hairpin between the DNA strands. Then UvrB probes one DNA strand for the presence of a lesion. If a lesion is found the UvrA subunits dissociate and the UvrB-DNA preincision complex is formed. This complex is subsequently bound by UvrC and the second UvrB is released. If no lesion is found, the DNA wraps around the other UvrB subunit that will check the other stand for damage. The polypeptide is UvrABC system protein B (Cyanothece sp. (strain PCC 7425 / ATCC 29141)).